Consider the following 130-residue polypeptide: Keratin-associated protein 12-1 (130 aa).

A run of 14 repeats spans residues 10–14 (CQPSC), 15–29 (CVSS…VSSP), 34–38 (CFVSS), 40–44 (CQPSC), 45–49 (CVSSS), 60–64 (CIPVR), 85–89 (CQSSV), 90–94 (CVPVS), 95–99 (CRPVC), 104–108 (CQSSG), 109–113 (CCQPS), 114–118 (CPTLV), 119–123 (CKPVT), and 124–128 (CSNPS). A 14 X 5 AA approximate repeats region spans residues 10–128 (CQPSCCVSSS…CKPVTCSNPS (119 aa)).

It belongs to the KRTAP type 12 family. In terms of assembly, interacts with hair keratins. As to expression, expressed only in the head and back skin of a 3 day old mouse. Not expressed in adult skin.

Functionally, in the hair cortex, hair keratin intermediate filaments are embedded in an interfilamentous matrix, consisting of hair keratin-associated proteins (KRTAP), which are essential for the formation of a rigid and resistant hair shaft through their extensive disulfide bond cross-linking with abundant cysteine residues of hair keratins. The matrix proteins include the high-sulfur and high-glycine-tyrosine keratins. In Mus musculus (Mouse), this protein is Keratin-associated protein 12-1.